Reading from the N-terminus, the 331-residue chain is 5-formaminoimidazole-4-carboxamide-1-(beta)-D-ribofuranosyl 5'-monophosphate synthetase (331 aa).

Residues His9 and Ser69 each contribute to the 5-amino-1-(5-phospho-beta-D-ribosyl)imidazole-4-carboxamide site. Residues 76-322 (VELVEKMKVP…IAMELKQGLE (247 aa)) enclose the ATP-grasp domain. Residues 120–179 (PDDI…VPVY) and Glu201 each bind ATP. Position 229 (Asn229) interacts with 5-amino-1-(5-phospho-beta-D-ribosyl)imidazole-4-carboxamide. The Mg(2+) site is built by Glu267 and Glu280.

The protein belongs to the phosphohexose mutase family. It depends on Mg(2+) as a cofactor. Mn(2+) is required as a cofactor.

The enzyme catalyses 5-amino-1-(5-phospho-beta-D-ribosyl)imidazole-4-carboxamide + formate + ATP = 5-formamido-1-(5-phospho-D-ribosyl)imidazole-4-carboxamide + ADP + phosphate. Its pathway is purine metabolism; IMP biosynthesis via de novo pathway; 5-formamido-1-(5-phospho-D-ribosyl)imidazole-4-carboxamide from 5-amino-1-(5-phospho-D-ribosyl)imidazole-4-carboxamide (formate route): step 1/1. Functionally, catalyzes the ATP- and formate-dependent formylation of 5-aminoimidazole-4-carboxamide-1-beta-d-ribofuranosyl 5'-monophosphate (AICAR) to 5-formaminoimidazole-4-carboxamide-1-beta-d-ribofuranosyl 5'-monophosphate (FAICAR) in the absence of folates. The chain is 5-formaminoimidazole-4-carboxamide-1-(beta)-D-ribofuranosyl 5'-monophosphate synthetase from Thermococcus kodakarensis (strain ATCC BAA-918 / JCM 12380 / KOD1) (Pyrococcus kodakaraensis (strain KOD1)).